Here is a 68-residue protein sequence, read N- to C-terminus: Cytochrome c3 (68 aa).

Residues His17, His20, Cys26, Cys29, His30, His45, Cys49, Cys52, His53, Cys62, Cys65, and His66 each coordinate heme.

Post-translationally, binds 3 heme groups per subunit.

Its function is as follows. Participates in sulfate respiration coupled with phosphorylation by transferring electrons from the enzyme dehydrogenase to ferredoxin. This is Cytochrome c3 (cyd) from Desulfuromonas acetoxidans (Chloropseudomonas ethylica).